A 451-amino-acid chain; its full sequence is Probable asparagine--tRNA ligase, cytoplasmic (451 aa).

It belongs to the class-II aminoacyl-tRNA synthetase family.

The protein localises to the cytoplasm. It catalyses the reaction tRNA(Asn) + L-asparagine + ATP = L-asparaginyl-tRNA(Asn) + AMP + diphosphate + H(+). The protein is Probable asparagine--tRNA ligase, cytoplasmic of Encephalitozoon cuniculi (strain GB-M1) (Microsporidian parasite).